The chain runs to 239 residues: Uridylate kinase (239 aa).

ATP is bound at residue 10–13 (KLSG). Residues 18–23 (GEDGYG) form an involved in allosteric activation by GTP region. Residue G52 coordinates UMP. ATP-binding residues include G53 and R57. UMP contacts are provided by residues D72 and 133-140 (TGNPYFTT). 3 residues coordinate ATP: T160, Y166, and D169.

This sequence belongs to the UMP kinase family. As to quaternary structure, homohexamer.

The protein resides in the cytoplasm. The catalysed reaction is UMP + ATP = UDP + ADP. It functions in the pathway pyrimidine metabolism; CTP biosynthesis via de novo pathway; UDP from UMP (UMPK route): step 1/1. Its activity is regulated as follows. Allosterically activated by GTP. Inhibited by UTP. In terms of biological role, catalyzes the reversible phosphorylation of UMP to UDP. The protein is Uridylate kinase of Chlorobium chlorochromatii (strain CaD3).